The chain runs to 249 residues: U2 small nuclear ribonucleoprotein A' (249 aa).

4 LRR repeats span residues 20–41 (KERELDLRGNKIPVIENLGATE), 43–64 (QFDTIDLSDNEIVKLENFPYLN), 65–87 (RLGTLLINNNRITRINPNLGEFL), and 89–110 (KLHSLVLTNNRLVNLVEIDPLA). The region spanning 123–161 (NNITKKANYRLYVIHKLKSLRVLDFIKIKAKERAEAASL) is the LRRCT domain.

This sequence belongs to the U2 small nuclear ribonucleoprotein A family.

Its subcellular location is the nucleus. The protein localises to the nucleus speckle. Its function is as follows. This protein is associated with sn-RNP U2. It helps the A' protein to bind stem loop IV of U2 snRNA. The chain is U2 small nuclear ribonucleoprotein A' from Arabidopsis thaliana (Mouse-ear cress).